We begin with the raw amino-acid sequence, 269 residues long: MVKISFQPAVAGVKAEKADKAAASGPASASAPAAEILLTPAREERPPRHRSRKGGSVGGVCYLSMGMVVLLMGLVFASVYIYRYFFLAQLARDNFFHCGVLYEDSLSSQIRTRLELEEDVKIYLEENYERINVPVPQFGGGDPADIIHDFQRGLTAYHDISLDKCYVIELNTTIVLPPRNFWELLMNVKRGTYLPQTYIIQEEMVVTEHVRDKEALGSFIYHLCNGKDTYRLRRRATRRRINKRGAKNCNAIRHFENTFVVETLICGVV.

T39 bears the Phosphothreonine mark. A helical; Signal-anchor for type II membrane protein transmembrane segment spans residues 57-77 (VGGVCYLSMGMVVLLMGLVFA). The region spanning 138–232 (FGGGDPADII…LCNGKDTYRL (95 aa)) is the BRICHOS domain. An intrachain disulfide couples C165 to C224. Residue N171 is glycosylated (N-linked (GlcNAc...) asparagine).

Belongs to the ITM2 family. Interacts with BACE1. Interacts with APP. Interacts with STMN2. In terms of processing, type I membrane-bound, as well as soluble, furin has a pre-eminent role in ITM2C proteolytic processing. PCSK7 and PCSK5 may also be involved although to a lesser extent. The soluble form of PCSK7 is incapable of processing ITM2C. Fails to undergo shedding by ADAM10 and intramembrane cleavage by SPPL2B.

The protein localises to the lysosome membrane. Its subcellular location is the cell membrane. Negative regulator of amyloid-beta peptide production. May inhibit the processing of APP by blocking its access to alpha- and beta-secretase. Binding to the beta-secretase-cleaved APP C-terminal fragment is negligible, suggesting that ITM2C is a poor gamma-secretase cleavage inhibitor. May play a role in TNF-induced cell death and neuronal differentiation. The chain is Integral membrane protein 2C (Itm2c) from Rattus norvegicus (Rat).